The sequence spans 252 residues: Trans-aconitate 2-methyltransferase (252 aa).

The protein belongs to the methyltransferase superfamily. Tam family.

The protein localises to the cytoplasm. The catalysed reaction is trans-aconitate + S-adenosyl-L-methionine = (E)-3-(methoxycarbonyl)pent-2-enedioate + S-adenosyl-L-homocysteine. Its function is as follows. Catalyzes the S-adenosylmethionine monomethyl esterification of trans-aconitate. This Escherichia coli (strain ATCC 8739 / DSM 1576 / NBRC 3972 / NCIMB 8545 / WDCM 00012 / Crooks) protein is Trans-aconitate 2-methyltransferase.